Consider the following 586-residue polypeptide: Switch-associated protein 70 (586 aa).

A PH domain is found at 210–306; the sequence is DVLKQGYMLK…WIQAIQTTVS (97 aa). Residues 316–538 are a coiled coil; the sequence is HKEARQKRKE…NNTRSWKDKV (223 aa).

In terms of assembly, the SWAP complex consists of NPM1, NCL, PARP1 and SWAP70. Tyrosine-phosphorylated.

Its subcellular location is the cytoplasm. The protein localises to the cell membrane. It localises to the nucleus. The protein resides in the cell projection. It is found in the lamellipodium. Functionally, phosphatidylinositol 3,4,5-trisphosphate-dependent guanine nucleotide exchange factor (GEF) which, independently of RAS, transduces signals from tyrosine kinase receptors to RAC. It also mediates signaling of membrane ruffling. Regulates the actin cytoskeleton as an effector or adapter protein in response to agonist stimulated phosphatidylinositol (3,4)-bisphosphate production and cell protrusion. The protein is Switch-associated protein 70 (SWAP70) of Gallus gallus (Chicken).